Reading from the N-terminus, the 934-residue chain is Protocadherin gamma-C3 (934 aa).

A signal peptide spans 1 to 31 (MVPEAWRSGLVSTGRVVGVLLLLGALNKAST). Cadherin domains are found at residues 32–135 (VIHY…NPAF), 136–244 (PTQE…APVF), 245–352 (NQSL…APEI), 353–457 (TVTS…PPQS), 458–567 (SQSS…APQV), and 572–685 (PGGS…APRE). The Extracellular segment spans residues 32 to 693 (VIHYEIPEER…REQKKNLTFY (662 aa)). 6 N-linked (GlcNAc...) asparagine glycosylation sites follow: asparagine 245, asparagine 424, asparagine 478, asparagine 550, asparagine 615, and asparagine 689. The chain crosses the membrane as a helical span at residues 694-714 (LLLSLILVSVGFVVTVFGVII). Residues 715 to 934 (FKVYKWKQSR…KKKSGKKEKK (220 aa)) lie on the Cytoplasmic side of the membrane. Disordered regions lie at residues 804–843 (ESAP…WPNN) and 904–934 (ATLT…KEKK). Residues 812–843 (APPNTDWRFSQAQRPGTSGSQNGDDTGTWPNN) are compositionally biased toward polar residues. Basic residues predominate over residues 924-934 (NKKKSGKKEKK).

It is found in the cell membrane. Functionally, potential calcium-dependent cell-adhesion protein. May be involved in the establishment and maintenance of specific neuronal connections in the brain. The sequence is that of Protocadherin gamma-C3 (PCDHGC3) from Homo sapiens (Human).